A 315-amino-acid chain; its full sequence is Methenyltetrahydromethanopterin cyclohydrolase (315 aa).

Belongs to the MCH family.

The protein localises to the cytoplasm. It carries out the reaction 5,10-methenyl-5,6,7,8-tetrahydromethanopterin + H2O = N(5)-formyl-5,6,7,8-tetrahydromethanopterin + H(+). It functions in the pathway one-carbon metabolism; methanogenesis from CO(2); 5,10-methenyl-5,6,7,8-tetrahydromethanopterin from CO(2): step 3/3. Functionally, catalyzes the reversible interconversion of 5-formyl-H(4)MPT to methenyl-H(4)MPT(+). The protein is Methenyltetrahydromethanopterin cyclohydrolase of Methanospirillum hungatei JF-1 (strain ATCC 27890 / DSM 864 / NBRC 100397 / JF-1).